Here is a 296-residue protein sequence, read N- to C-terminus: Ribosomal RNA small subunit methyltransferase H (296 aa).

S-adenosyl-L-methionine contacts are provided by residues 38-40 (GVH), Glu57, Phe80, Asp103, and His110.

Belongs to the methyltransferase superfamily. RsmH family.

The protein resides in the cytoplasm. It catalyses the reaction cytidine(1402) in 16S rRNA + S-adenosyl-L-methionine = N(4)-methylcytidine(1402) in 16S rRNA + S-adenosyl-L-homocysteine + H(+). Its function is as follows. Specifically methylates the N4 position of cytidine in position 1402 (C1402) of 16S rRNA. This is Ribosomal RNA small subunit methyltransferase H from Borreliella burgdorferi (strain ATCC 35210 / DSM 4680 / CIP 102532 / B31) (Borrelia burgdorferi).